Consider the following 118-residue polypeptide: Protein YoeF (118 aa).

The sequence is that of Protein YoeF (yoeF) from Escherichia coli (strain K12).